The sequence spans 453 residues: Homogentisate 1,2-dioxygenase (453 aa).

Residue histidine 304 is the Proton acceptor of the active site. Fe cation-binding residues include histidine 347 and glutamate 353. Homogentisate-binding residues include tyrosine 362 and histidine 383. Fe cation is bound at residue histidine 383.

The protein belongs to the homogentisate dioxygenase family. In terms of assembly, hexamer; dimer of trimers. Fe cation serves as cofactor.

It catalyses the reaction homogentisate + O2 = 4-maleylacetoacetate + H(+). Its pathway is amino-acid degradation; L-phenylalanine degradation; acetoacetate and fumarate from L-phenylalanine: step 4/6. Involved in the catabolism of homogentisate (2,5-dihydroxyphenylacetate or 2,5-OH-PhAc), a central intermediate in the degradation of phenylalanine and tyrosine. Catalyzes the oxidative ring cleavage of the aromatic ring of homogentisate to yield maleylacetoacetate. This Sinorhizobium fredii (strain NBRC 101917 / NGR234) protein is Homogentisate 1,2-dioxygenase.